The following is a 740-amino-acid chain: Elongation factor 2 (740 aa).

The tr-type G domain occupies 23 to 264 (AQIRNAGTLA…MIIEHIPPPN (242 aa)). GTP-binding positions include 32–39 (AHVDHGKT), 98–102 (DTPGH), and 152–155 (NKID). A Diphthamide modification is found at His-605.

This sequence belongs to the TRAFAC class translation factor GTPase superfamily. Classic translation factor GTPase family. EF-G/EF-2 subfamily.

It localises to the cytoplasm. Catalyzes the GTP-dependent ribosomal translocation step during translation elongation. During this step, the ribosome changes from the pre-translocational (PRE) to the post-translocational (POST) state as the newly formed A-site-bound peptidyl-tRNA and P-site-bound deacylated tRNA move to the P and E sites, respectively. Catalyzes the coordinated movement of the two tRNA molecules, the mRNA and conformational changes in the ribosome. In Pyrobaculum aerophilum (strain ATCC 51768 / DSM 7523 / JCM 9630 / CIP 104966 / NBRC 100827 / IM2), this protein is Elongation factor 2.